Here is a 388-residue protein sequence, read N- to C-terminus: Cuticle-degrading protease (388 aa).

The first 18 residues, 1 to 18 (MHLSALLTLLPAVLAAPA), serve as a signal peptide directing secretion. Residues 19 to 107 (TIGRRAEPAP…IEKDAVMRIS (89 aa)) constitute a propeptide that is removed on maturation. One can recognise an Inhibitor I9 domain in the interval 41 to 106 (KYIVKFKDDI…FIEKDAVMRI (66 aa)). Positions 116–388 (PWGLGRISHR…TVNYLAYNGA (273 aa)) constitute a Peptidase S8 domain. Cystine bridges form between Cys143–Cys233 and Cys288–Cys360. Active-site charge relay system residues include Asp148 and His179. The N-linked (GlcNAc...) asparagine glycan is linked to Asn296. Ser334 functions as the Charge relay system in the catalytic mechanism.

The protein belongs to the peptidase S8 family.

The protein resides in the secreted. Capable of breaching the insect cuticle. The protein is Cuticle-degrading protease (PR1) of Metarhizium anisopliae (Entomophthora anisopliae).